A 237-amino-acid chain; its full sequence is Ribosomal RNA small subunit methyltransferase G (237 aa).

Residues glycine 78, phenylalanine 83, 129-130 (AE), and arginine 148 contribute to the S-adenosyl-L-methionine site.

Belongs to the methyltransferase superfamily. RNA methyltransferase RsmG family.

It is found in the cytoplasm. In terms of biological role, specifically methylates the N7 position of a guanine in 16S rRNA. The polypeptide is Ribosomal RNA small subunit methyltransferase G (Streptococcus pyogenes serotype M18 (strain MGAS8232)).